Reading from the N-terminus, the 315-residue chain is GTP cyclohydrolase MptA (315 aa).

The protein belongs to the GTP cyclohydrolase IV family. In terms of assembly, homodimer. Requires Fe(2+) as cofactor.

The enzyme catalyses GTP + H2O = 7,8-dihydroneopterin 2',3'-cyclic phosphate + formate + diphosphate + H(+). Its pathway is cofactor biosynthesis; 5,6,7,8-tetrahydromethanopterin biosynthesis. In terms of biological role, converts GTP to 7,8-dihydro-D-neopterin 2',3'-cyclic phosphate, the first intermediate in the biosynthesis of coenzyme methanopterin. In Methanococcus maripaludis (strain C5 / ATCC BAA-1333), this protein is GTP cyclohydrolase MptA.